The chain runs to 778 residues: Beta-phellandrene synthase (neryl-diphosphate-cyclizing), chloroplastic (778 aa).

A chloroplast-targeting transit peptide spans 1-36 (MIVGYRSTIITLSHPKLGNGKTISSNAIFQRSCRVR). Residues D531, N676, and E684 each coordinate Mg(2+). The short motif at 531–535 (DDHFE) is the DDXXD motif element.

Belongs to the terpene synthase family. Tpse subfamily. The cofactor is Mg(2+). In terms of tissue distribution, trichomes.

The protein localises to the plastid. Its subcellular location is the chloroplast. The enzyme catalyses neryl diphosphate = beta-phellandrene + diphosphate. Its function is as follows. Monoterpene synthase catalyzing the production of beta-phellandrene from neryl diphosphate. Also produces lower amounts of delta-2-carene, alpha-phellandrene and limonene. When incubated in vitro with geranyl diphosphate, catalyzes the formation of acyclic myrcene and ocimene as major products in addition to beta-phellandrene. The protein is Beta-phellandrene synthase (neryl-diphosphate-cyclizing), chloroplastic (PHS1) of Solanum lycopersicum (Tomato).